Here is a 391-residue protein sequence, read N- to C-terminus: 1-acyl-sn-glycerol-3-phosphate acyltransferase 2 (391 aa).

A helical membrane pass occupies residues 3–23 (MAAAAVIVPLGILFFISGLVV). The HXXXXD motif motif lies at 92–97 (HRSDID). The next 2 membrane-spanning stretches (helical) occupy residues 306–326 (LAVV…FLHW) and 334–354 (KGIA…QILI). The tract at residues 358–391 (QSERSTPAKVAPAKPKDKHQSGSSSQTEVEEKQK) is disordered.

The protein belongs to the 1-acyl-sn-glycerol-3-phosphate acyltransferase family.

The protein resides in the endoplasmic reticulum membrane. It carries out the reaction a 1-acyl-sn-glycero-3-phosphate + an acyl-CoA = a 1,2-diacyl-sn-glycero-3-phosphate + CoA. Its pathway is phospholipid metabolism; CDP-diacylglycerol biosynthesis; CDP-diacylglycerol from sn-glycerol 3-phosphate: step 2/3. Functionally, converts lysophosphatidic acid (LPA) into phosphatidic acid by incorporating acyl moiety at the 2 position. In Brassica oleracea (Wild cabbage), this protein is 1-acyl-sn-glycerol-3-phosphate acyltransferase 2 (LPAT2).